The following is a 230-amino-acid chain: Ribonuclease 3 (230 aa).

In terms of domain architecture, RNase III spans Asp10–Ser133. Residue Glu46 coordinates Mg(2+). The active site involves Asp50. The Mg(2+) site is built by Asp119 and Glu122. The active site involves Glu122. In terms of domain architecture, DRBM spans Asp161–Gln230.

It belongs to the ribonuclease III family. Homodimer. Requires Mg(2+) as cofactor.

It localises to the cytoplasm. It catalyses the reaction Endonucleolytic cleavage to 5'-phosphomonoester.. In terms of biological role, digests double-stranded RNA. Involved in the processing of primary rRNA transcript to yield the immediate precursors to the large and small rRNAs (23S and 16S). Processes some mRNAs, and tRNAs when they are encoded in the rRNA operon. Processes pre-crRNA and tracrRNA of type II CRISPR loci if present in the organism. The chain is Ribonuclease 3 (rnc) from Acinetobacter baumannii (strain AB307-0294).